The following is a 65-amino-acid chain: MDSQRTVELTNPRGRSKERGDSGGKQKNSMGRKIANDAISESKQGVMGASTYIADKIKVTINFNF.

The segment at 1 to 41 (MDSQRTVELTNPRGRSKERGDSGGKQKNSMGRKIANDAISE) is disordered. The segment covering 15–24 (RSKERGDSGG) has biased composition (basic and acidic residues). The interval 17–43 (KERGDSGGKQKNSMGRKIANDAISESK) is RNA-binding.

The protein belongs to the carmovirus double gene block protein 1 family. Homodimer.

Functionally, cell-to-cell movement. Displays RNA-binding activity. This chain is Double gene block protein 1, found in Melon necrotic spot virus (MNSV).